Reading from the N-terminus, the 1061-residue chain is Protein pid-5 (1061 aa).

This sequence belongs to the peptidase M24B family. In terms of assembly, may interact with pid-2, app-1 and prmt-5.

The protein resides in the cytoplasm. Its subcellular location is the perinuclear region. It is found in the P-body. Its function is as follows. Together with pid-4, it is involved in gene silencing mediated by a class of 21 nucleotide PIWI-interacting RNAs (piRNAs) that possess a uracil residue at the 5'-end (also called 21U-RNAs) and guide the Piwi protein prg-1 to its DNA targets for silencing. Together with pid-4, it is required for the biogenesis of secondary and tertiary 22G-siRNAs. Specifically, promotes the production of 22G-siRNAs from the 5' end of target mRNAs. Together with pid-4, plays a role in small RNA-directed transgenerational epigenetic inheritance (also called RNAe) over several generations and germline immortality. Together with pid-4, plays a role in the formation of liquid-like condensates in the cytoplasm called Z granules. This is Protein pid-5 from Caenorhabditis elegans.